Here is a 223-residue protein sequence, read N- to C-terminus: MSGQILWGIMPYIVLTIFIGGHIYRYQHDQFGWTAKSSELLEKKKLAAGSTLFHWGLLCVVGGHVMGILIPEGVYASLGISEHMYHKMAIGAGLPAGIAACTGLVILTYRRLFDKRIRKTSSPSDILTLLLLLFMMLSGVAATFLNIDSKGFDYRTTVGPWFREIVLFRPDASLMESVPLWFKFHIVIGYVVFILWPFTRLVHVFSLPLKYLTRSYVVYRKRS.

The chain crosses the membrane as a helical span at residues 2 to 27 (SGQILWGIMPYIVLTIFIGGHIYRYQ). Residues 28-45 (HDQFGWTAKSSELLEKKK) lie on the Cytoplasmic side of the membrane. A helical membrane pass occupies residues 46-68 (LAAGSTLFHWGLLCVVGGHVMGI). Residues His54 and His64 each coordinate heme b. Over 69-81 (LIPEGVYASLGIS) the chain is Extracellular. Residues 82–111 (EHMYHKMAIGAGLPAGIAACTGLVILTYRR) form a helical membrane-spanning segment. The Cytoplasmic segment spans residues 112 to 123 (LFDKRIRKTSSP). A helical membrane pass occupies residues 124-147 (SDILTLLLLLFMMLSGVAATFLNI). Residues 148–180 (DSKGFDYRTTVGPWFREIVLFRPDASLMESVPL) are Extracellular-facing. Residues 181–196 (WFKFHIVIGYVVFILW) form a helical membrane-spanning segment. Heme b contacts are provided by His185 and His203. Over 197–223 (PFTRLVHVFSLPLKYLTRSYVVYRKRS) the chain is Cytoplasmic.

Requires heme as cofactor.

The protein resides in the cell membrane. The enzyme catalyses nitrate + a quinol = a quinone + nitrite + H2O. The gamma chain is a membrane-embedded heme-iron unit resembling cytochrome b, which transfers electrons from quinones to the beta subunit. This chain is Nitrate reductase gamma chain (narI), found in Bacillus subtilis (strain 168).